Reading from the N-terminus, the 165-residue chain is Cyclic pyranopterin monophosphate synthase (165 aa).

Substrate-binding positions include 83–85 and 120–121; these read FCH and ME. Asp135 is a catalytic residue.

Belongs to the MoaC family. As to quaternary structure, homohexamer; trimer of dimers.

It carries out the reaction (8S)-3',8-cyclo-7,8-dihydroguanosine 5'-triphosphate = cyclic pyranopterin phosphate + diphosphate. The protein operates within cofactor biosynthesis; molybdopterin biosynthesis. In terms of biological role, catalyzes the conversion of (8S)-3',8-cyclo-7,8-dihydroguanosine 5'-triphosphate to cyclic pyranopterin monophosphate (cPMP). This Xanthomonas axonopodis pv. citri (strain 306) protein is Cyclic pyranopterin monophosphate synthase.